The following is a 118-amino-acid chain: Small ribosomal subunit protein uS13 (118 aa).

Residues 94–118 form a disordered region; the sequence is GLPVHGQRTKTNARTRKGPAKSITR.

The protein belongs to the universal ribosomal protein uS13 family. As to quaternary structure, part of the 30S ribosomal subunit. Forms a loose heterodimer with protein S19. Forms two bridges to the 50S subunit in the 70S ribosome.

In terms of biological role, located at the top of the head of the 30S subunit, it contacts several helices of the 16S rRNA. In the 70S ribosome it contacts the 23S rRNA (bridge B1a) and protein L5 of the 50S subunit (bridge B1b), connecting the 2 subunits; these bridges are implicated in subunit movement. Contacts the tRNAs in the A and P-sites. The polypeptide is Small ribosomal subunit protein uS13 (Acidithiobacillus ferrooxidans (strain ATCC 23270 / DSM 14882 / CIP 104768 / NCIMB 8455) (Ferrobacillus ferrooxidans (strain ATCC 23270))).